Consider the following 119-residue polypeptide: Beta-2-microglobulin (119 aa).

A signal peptide spans 1 to 20; it reads MARTVATFFLMLVSLACLDA. The Ig-like C1-type domain occupies 25–114; it reads PQVQVYTRHP…VTLKEPKVVT (90 aa). An intrachain disulfide couples C45 to C100.

It belongs to the beta-2-microglobulin family. In terms of assembly, heterodimer of an alpha chain and a beta chain. Beta-2-microglobulin is the beta-chain of major histocompatibility complex class I molecules.

The protein localises to the secreted. Its function is as follows. Component of the class I major histocompatibility complex (MHC). Involved in the presentation of peptide antigens to the immune system. The polypeptide is Beta-2-microglobulin (B2M) (Sigmodon hispidus (Hispid cotton rat)).